Consider the following 321-residue polypeptide: Fe-S cluster assembly protein DRE2 (321 aa).

Positions 1–131 are N-terminal SAM-like domain; it reads MERMLLLSPP…KPDFGPENIV (131 aa). A linker region spans residues 132 to 213; the sequence is PLKLGKRKPV…EETLLDGEDM (82 aa). [2Fe-2S] cluster contacts are provided by Cys-223, Cys-234, Cys-237, and Cys-239. A fe-S binding site A region spans residues 223–239; the sequence is CRPKAGKRRRACKDCTC. The [4Fe-4S] cluster site is built by Cys-284, Cys-287, Cys-295, and Cys-298. 2 short sequence motifs (cx2C motif) span residues 284–287 and 295–298; these read CGNC and CDGC. A fe-S binding site B region spans residues 284–298; the sequence is CGNCALGDAFRCDGC.

The protein belongs to the anamorsin family. Monomer. Interacts with TAH18. Interacts with MIA40. [2Fe-2S] cluster serves as cofactor. The cofactor is [4Fe-4S] cluster.

The protein resides in the cytoplasm. The protein localises to the mitochondrion intermembrane space. Its function is as follows. Component of the cytosolic iron-sulfur (Fe-S) protein assembly (CIA) machinery required for the maturation of extramitochondrial Fe-S proteins. Part of an electron transfer chain functioning in an early step of cytosolic Fe-S biogenesis, facilitating the de novo assembly of a [4Fe-4S] cluster on the scaffold complex CFD1-NBP35. Electrons are transferred to DRE2 from NADPH via the FAD- and FMN-containing protein TAH18. TAH18-DRE2 are also required for the assembly of the diferric tyrosyl radical cofactor of ribonucleotide reductase (RNR), probably by providing electrons for reduction during radical cofactor maturation in the catalytic small subunit RNR2. In Coccidioides immitis (strain RS) (Valley fever fungus), this protein is Fe-S cluster assembly protein DRE2.